A 506-amino-acid polypeptide reads, in one-letter code: MTQAVMLQGTASDVGKSVLVAGLCRIFYQDGLRTAPFKSQNMALNSGITPDGKEMGRAQIFQAEAAGIAPDVRMNPVLLKPTSDRKAQVVLMGKVATDMDAVSYHEYKPRLREQILTVYNSLAQEYDVLVLEGAGSPAEINLRDRDIVNMGMAEMAQCPVILVADIDRGGVFASIYGTLALLHDSERARVKGVIINKFRGDVTLLYSGIEQIEALTGVPVLGVMPWLEVDLEDEDGVALQKGKYLRTDKRDIDIAVVQVPHISNFTDFNALAAQPDVRVRYVRHPEELAGADLIILPGSKNTLGDLVWLRESAMAHGVLQAHRQGVPVAGICGGYQMLGDTIIDEVESGLGTLPGLGLLNTVTHFAQDKTTTQVEGQMASALPGWLAAASGLAVRGYEIHMGETTLNAQCQPAMTLRKGENAIADGAVTDDGLVFGTYLHGLFDSDAFTRALVNGLRVRKGLTPLDHAFHYAQYKSQQFDLLADAMRQHIDIEKIYTIMQQHREPV.

The 198-residue stretch at Asp-251–Phe-448 folds into the GATase cobBQ-type domain. Cys-332 (nucleophile) is an active-site residue. Residue His-440 is part of the active site.

This sequence belongs to the CobB/CobQ family. CobQ subfamily.

Its pathway is cofactor biosynthesis; adenosylcobalamin biosynthesis. Functionally, catalyzes amidations at positions B, D, E, and G on adenosylcobyrinic A,C-diamide. NH(2) groups are provided by glutamine, and one molecule of ATP is hydrogenolyzed for each amidation. This Citrobacter koseri (strain ATCC BAA-895 / CDC 4225-83 / SGSC4696) protein is Cobyric acid synthase.